A 541-amino-acid chain; its full sequence is Arginine--tRNA ligase (541 aa).

The 'HIGH' region signature appears at 119–129 (ANPTGPLHIGH).

This sequence belongs to the class-I aminoacyl-tRNA synthetase family. Monomer.

The protein localises to the cytoplasm. The enzyme catalyses tRNA(Arg) + L-arginine + ATP = L-arginyl-tRNA(Arg) + AMP + diphosphate. This chain is Arginine--tRNA ligase, found in Helicobacter acinonychis (strain Sheeba).